The primary structure comprises 150 residues: L-alanine exporter AlaE (150 aa).

Transmembrane regions (helical) follow at residues 17–37, 48–68, 86–106, and 111–131; these read FAMV…VSGM, LSIP…DYVL, LVAY…TVGA, and IITA…LYGY.

It belongs to the AlaE exporter family.

Its subcellular location is the cell inner membrane. Exports L-alanine. This Vibrio cholerae serotype O1 (strain ATCC 39315 / El Tor Inaba N16961) protein is L-alanine exporter AlaE.